The sequence spans 196 residues: Ribonuclease HII (196 aa).

Residues 9–196 (GLVCGIDEAG…GPVARQLSLL (188 aa)) form the RNase H type-2 domain. Aspartate 15, glutamate 16, and aspartate 107 together coordinate a divalent metal cation.

It belongs to the RNase HII family. Mn(2+) is required as a cofactor. The cofactor is Mg(2+).

It localises to the cytoplasm. The catalysed reaction is Endonucleolytic cleavage to 5'-phosphomonoester.. Its function is as follows. Endonuclease that specifically degrades the RNA of RNA-DNA hybrids. The polypeptide is Ribonuclease HII (Dechloromonas aromatica (strain RCB)).